The primary structure comprises 231 residues: ATP-dependent dethiobiotin synthetase BioD 2 (231 aa).

13 to 18 (SVGKTV) contacts ATP. Residue T17 coordinates Mg(2+). Residue K38 is part of the active site. Residues D55, 112–115 (EGTG), 172–173 (NR), 201–203 (PYL), and Q208 contribute to the ATP site. Mg(2+) is bound by residues D55 and E112.

The protein belongs to the dethiobiotin synthetase family. Homodimer. It depends on Mg(2+) as a cofactor.

Its subcellular location is the cytoplasm. The catalysed reaction is (7R,8S)-7,8-diammoniononanoate + CO2 + ATP = (4R,5S)-dethiobiotin + ADP + phosphate + 3 H(+). Its pathway is cofactor biosynthesis; biotin biosynthesis; biotin from 7,8-diaminononanoate: step 1/2. In terms of biological role, catalyzes a mechanistically unusual reaction, the ATP-dependent insertion of CO2 between the N7 and N8 nitrogen atoms of 7,8-diaminopelargonic acid (DAPA, also called 7,8-diammoniononanoate) to form a ureido ring. The polypeptide is ATP-dependent dethiobiotin synthetase BioD 2 (Salmonella typhi).